A 132-amino-acid polypeptide reads, in one-letter code: Small ribosomal subunit protein uS8 (132 aa).

This sequence belongs to the universal ribosomal protein uS8 family. As to quaternary structure, part of the 30S ribosomal subunit. Contacts proteins S5 and S12.

Its function is as follows. One of the primary rRNA binding proteins, it binds directly to 16S rRNA central domain where it helps coordinate assembly of the platform of the 30S subunit. In Streptococcus equi subsp. equi (strain 4047), this protein is Small ribosomal subunit protein uS8.